The following is a 590-amino-acid chain: Aspartate--tRNA ligase (590 aa).

An L-aspartate-binding site is contributed by Glu-172. The segment at 196–199 is aspartate; it reads QLFK. Arg-218 serves as a coordination point for L-aspartate. ATP contacts are provided by residues 218–220 and Gln-227; that span reads RDE. An L-aspartate-binding site is contributed by His-449. An ATP-binding site is contributed by Glu-483. Arg-490 provides a ligand contact to L-aspartate. 535 to 538 contacts ATP; that stretch reads GLDR.

The protein belongs to the class-II aminoacyl-tRNA synthetase family. Type 1 subfamily. As to quaternary structure, homodimer.

The protein resides in the cytoplasm. It carries out the reaction tRNA(Asp) + L-aspartate + ATP = L-aspartyl-tRNA(Asp) + AMP + diphosphate. In terms of biological role, catalyzes the attachment of L-aspartate to tRNA(Asp) in a two-step reaction: L-aspartate is first activated by ATP to form Asp-AMP and then transferred to the acceptor end of tRNA(Asp). The chain is Aspartate--tRNA ligase from Mannheimia succiniciproducens (strain KCTC 0769BP / MBEL55E).